The sequence spans 295 residues: Ribosomal protein L11 methyltransferase (295 aa).

4 residues coordinate S-adenosyl-L-methionine: T146, G167, D189, and N231.

The protein belongs to the methyltransferase superfamily. PrmA family.

It is found in the cytoplasm. It carries out the reaction L-lysyl-[protein] + 3 S-adenosyl-L-methionine = N(6),N(6),N(6)-trimethyl-L-lysyl-[protein] + 3 S-adenosyl-L-homocysteine + 3 H(+). Methylates ribosomal protein L11. In Vibrio parahaemolyticus serotype O3:K6 (strain RIMD 2210633), this protein is Ribosomal protein L11 methyltransferase.